The chain runs to 186 residues: dCTP deaminase, dUMP-forming (186 aa).

Residues 101–106 (RSSLGR), D119, 127–129 (TLE), Q148, Y162, and Q171 contribute to the dCTP site. E129 serves as the catalytic Proton donor/acceptor.

The protein belongs to the dCTP deaminase family. In terms of assembly, homotrimer.

It catalyses the reaction dCTP + 2 H2O = dUMP + NH4(+) + diphosphate. The protein operates within pyrimidine metabolism; dUMP biosynthesis; dUMP from dCTP: step 1/1. Bifunctional enzyme that catalyzes both the deamination of dCTP to dUTP and the hydrolysis of dUTP to dUMP without releasing the toxic dUTP intermediate. This Coprothermobacter proteolyticus (strain ATCC 35245 / DSM 5265 / OCM 4 / BT) protein is dCTP deaminase, dUMP-forming.